The following is a 327-amino-acid chain: MTGHEDRVWSVAWSPNGFVLASCGGDKTIRIWGKEGDKWICKTILEDGHQRTIRSLGWSPCGTFLASASFDATTCIWDQKSGEFECNATLEGHENEVKSVDWSVSGSLLATCGRDKSVWIWEVQEDDEYECASVIHSHTQDVKKVVWHPTKEILASCSYDDTIKLYKEDEDDWSCCDTLEGHESTVWSISFDGSGDRIVSCSDDKTVRIWKSYPPGNQEGVVVSGKHTKWKCVCVLSGYHDRTIYDVHWSKVSGLIATASGDDCIRIFKEDTNSDRNQPSFQLVATQRKAHSMDVNSICWHPKDENILATCSDDGTVKLWRFTPAEE.

7 WD repeats span residues 3–42, 48–87, 92–131, 137–176, 181–220, 239–278, and 290–327; these read GHEDRVWSVAWSPNGFVLASCGGDKTIRIWGKEGDKWICK, GHQRTIRSLGWSPCGTFLASASFDATTCIWDQKSGEFECN, GHENEVKSVDWSVSGSLLATCGRDKSVWIWEVQEDDEYEC, SHTQDVKKVVWHPTKEILASCSYDDTIKLYKEDEDDWSCC, GHESTVWSISFDGSGDRIVSCSDDKTVRIWKSYPPGNQEG, YHDRTIYDVHWSKVSGLIATASGDDCIRIFKEDTNSDRNQ, and AHSMDVNSICWHPKDENILATCSDDGTVKLWRFTPAEE.

This sequence belongs to the WD repeat CIA1 family.

Functionally, essential component of the cytosolic iron-sulfur (Fe/S) protein assembly machinery. Required for the maturation of extramitochondrial Fe/S proteins. The chain is Probable cytosolic iron-sulfur protein assembly protein CIAO1 homolog from Nematostella vectensis (Starlet sea anemone).